The primary structure comprises 296 residues: Ribosomal RNA small subunit methyltransferase H (296 aa).

S-adenosyl-L-methionine-binding positions include 38 to 40 (GVH), glutamate 57, phenylalanine 80, aspartate 103, and histidine 110.

Belongs to the methyltransferase superfamily. RsmH family.

The protein localises to the cytoplasm. It catalyses the reaction cytidine(1402) in 16S rRNA + S-adenosyl-L-methionine = N(4)-methylcytidine(1402) in 16S rRNA + S-adenosyl-L-homocysteine + H(+). Functionally, specifically methylates the N4 position of cytidine in position 1402 (C1402) of 16S rRNA. The polypeptide is Ribosomal RNA small subunit methyltransferase H (Borreliella burgdorferi (strain ATCC 35210 / DSM 4680 / CIP 102532 / B31) (Borrelia burgdorferi)).